The chain runs to 130 residues: Small ribosomal subunit protein uS9 (130 aa).

Positions 99 to 110 are enriched in basic and acidic residues; that stretch reads KKAGFLTRDPRM. A disordered region spans residues 99–130; the sequence is KKAGFLTRDPRMKERKKYGLKKARRAPQFSKR. The span at 111–130 shows a compositional bias: basic residues; sequence KERKKYGLKKARRAPQFSKR.

It belongs to the universal ribosomal protein uS9 family.

This is Small ribosomal subunit protein uS9 from Clostridium botulinum (strain Eklund 17B / Type B).